Consider the following 591-residue polypeptide: Aspartate--tRNA(Asp/Asn) ligase (591 aa).

Glu-176 contributes to the L-aspartate binding site. An aspartate region spans residues 200–203 (QLFK). Arg-222 serves as a coordination point for L-aspartate. Residues 222–224 (RDE) and Gln-231 contribute to the ATP site. Residue His-450 coordinates L-aspartate. ATP is bound at residue Glu-484. Arg-491 provides a ligand contact to L-aspartate. 536-539 (GLDR) is a binding site for ATP.

The protein belongs to the class-II aminoacyl-tRNA synthetase family. Type 1 subfamily. As to quaternary structure, homodimer.

The protein localises to the cytoplasm. It carries out the reaction tRNA(Asx) + L-aspartate + ATP = L-aspartyl-tRNA(Asx) + AMP + diphosphate. In terms of biological role, aspartyl-tRNA synthetase with relaxed tRNA specificity since it is able to aspartylate not only its cognate tRNA(Asp) but also tRNA(Asn). Reaction proceeds in two steps: L-aspartate is first activated by ATP to form Asp-AMP and then transferred to the acceptor end of tRNA(Asp/Asn). In Bacillus thuringiensis (strain Al Hakam), this protein is Aspartate--tRNA(Asp/Asn) ligase.